The sequence spans 304 residues: Olfactory receptor 4K13 (304 aa).

At 1–25 (MERANHSVVSEFILLGLSKSQNLQI) the chain is on the extracellular side. N-linked (GlcNAc...) asparagine glycosylation is present at asparagine 5. The chain crosses the membrane as a helical span at residues 26-49 (LFFLGFSVVFVGIVLGNLLILVTV). The Cytoplasmic portion of the chain corresponds to 50–57 (TFDSLLHT). Residues 58-79 (PMYFLLSNLSCIDMILASFATP) form a helical membrane-spanning segment. Topologically, residues 80–100 (KMIVDFLRERKTISWWGCYSQ) are extracellular. A disulfide bridge connects residues cysteine 97 and cysteine 189. The helical transmembrane segment at 101–120 (MFFMHLLGGSEMMLLVAMAI) threads the bilayer. The Cytoplasmic segment spans residues 121–139 (DRYVAICKPLHYMTIMSPR). Residues 140-158 (VLTGLLLSSYAVGFVHSSS) form a helical membrane-spanning segment. The Extracellular segment spans residues 159-195 (QMAFMLTLPFCGPNVIDSFFCDLPLVIKLACKDTYIL). A helical transmembrane segment spans residues 196-219 (QLLVIADSGLLSLVCFLLLLVSYG). Residues 220–235 (VIIFSVRYRAASRSSK) lie on the Cytoplasmic side of the membrane. A helical transmembrane segment spans residues 236-258 (AFSTLSAHITVVTLFFAPCVFIY). At 259 to 269 (VWPFSRYSVDK) the chain is on the extracellular side. A helical transmembrane segment spans residues 270–289 (ILSVFYTIFTPLLNPIIYTL). The Cytoplasmic segment spans residues 290–304 (RNQEVKAAIKKRLCI).

Belongs to the G-protein coupled receptor 1 family.

Its subcellular location is the cell membrane. In terms of biological role, odorant receptor. The sequence is that of Olfactory receptor 4K13 (OR4K13) from Homo sapiens (Human).